The following is a 259-amino-acid chain: Hemin import ATP-binding protein HmuV (259 aa).

The ABC transporter domain maps to 2–238 (IEARDLNVSI…ALLSEVFDCQ (237 aa)). 34 to 41 (GPNGSGKS) contacts ATP.

It belongs to the ABC transporter superfamily. Heme (hemin) importer (TC 3.A.1.14.5) family. The complex is composed of two ATP-binding proteins (HmuV), two transmembrane proteins (HmuU) and a solute-binding protein (HmuT).

The protein resides in the cell inner membrane. Functionally, part of the ABC transporter complex HmuTUV involved in hemin import. Responsible for energy coupling to the transport system. The polypeptide is Hemin import ATP-binding protein HmuV (Chelativorans sp. (strain BNC1)).